The sequence spans 72 residues: Putative snRNP Sm-like protein (72 aa).

The Sm domain maps to Arg4–Pro72.

It belongs to the snRNP Sm proteins family.

The chain is Putative snRNP Sm-like protein from Methanosarcina barkeri (strain Fusaro / DSM 804).